A 522-amino-acid polypeptide reads, in one-letter code: TNF receptor-associated factor 6 (522 aa).

The tract at residues 1–354 is interaction with TAX1BP1; sequence MSLLNCENSC…EAQQCNGIYI (354 aa). Residues 70 to 109 form an RING-type; degenerate zinc finger; the sequence is CPICLMALREAVQTPCGHRFCKACIIKSIRDAGHKCPVDN. Residue lysine 124 forms a Glycyl lysine isopeptide (Lys-Gly) (interchain with G-Cter in SUMO); alternate linkage. Lysine 124 participates in a covalent cross-link: Glycyl lysine isopeptide (Lys-Gly) (interchain with G-Cter in ubiquitin); alternate. Lysine 142 is covalently cross-linked (Glycyl lysine isopeptide (Lys-Gly) (interchain with G-Cter in SUMO)). 2 consecutive TRAF-type zinc fingers follow at residues 150-202 and 203-259; these read DHQA…EDKE and IHDQ…NHLA. Residues 288–348 are a coiled coil; it reads YVSEVRNFQE…DKVAEIEAQQ (61 aa). A Glycyl lysine isopeptide (Lys-Gly) (interchain with G-Cter in ubiquitin) cross-link involves residue lysine 319. Positions 350 to 499 constitute an MATH domain; sequence NGIYIWKIGN…DDTLLVRCEV (150 aa). Positions 355–522 are interaction with TANK; it reads WKIGNFGMHL…FQPRSTDSGV (168 aa). Residue lysine 453 forms a Glycyl lysine isopeptide (Lys-Gly) (interchain with G-Cter in SUMO) linkage.

The protein belongs to the TNF receptor-associated factor family. A subfamily. Homotrimer. Homooligomer. N-terminal region is dimeric while C-terminal region is trimeric; maybe providing a mode of oligomerization. Upon IL1B treatment, forms a complex with PELI1, IRAK1, IRAK4 and MYD88; this complex recruits MAP3K7/TAK1, TAB1 and TAB2 to mediate NF-kappa-B activation. Direct binding of SMAD6 to PELI1 prevents the complex formation and hence negatively regulates IL1R-TLR signaling and eventually NF-kappa-B-mediated gene expression. Binds to TNFRSF5/CD40 and TNFRSF11A/RANK. Associates with NGFR, TNFRSF17, IRAK2, IRAK3, RIPK2, MAP3K1, MAP3K5, MAP3K14, CSK, TRAF, TRAF-interacting protein TRIP and TNF receptor associated protein TDP2. Interacts with IL17R. Interacts with SQSTM1 bridging NTRK1 and NGFR. Forms a ternary complex with SQSTM1 and PRKCZ. Interacts with PELI2 and PELI3. Binds UBE2V1. Interacts with TAX1BP1; this interaction mediates deubiquitination of TRAF6 and inhibition of NF-kappa-B activation. Interacts with ZNF675. Interacts with ARRB1 and ARRB2. Interacts with MAP3K7 and TAB1/MAP3K7IP1; during IL-1 signaling. Interacts with UBE2N. Interacts with TGFBR1, HDAC1 and RANGAP1. Interacts with AKT1, AKT2 and AKT3. Interacts (via TRAF domains) with NUMBL (via C-terminal). Interacts with RBCK1. Interacts with LIMD1 (via LIM domains). Interacts with RSAD2/viperin. Interacts (via C-terminus) with EIF2AK2/PKR (via the kinase catalytic domain). Interacts with ZFAND5. Interacts with IL1RL1. Interacts with TRAFD1. Interacts with AJUBA. Interacts with MAVS/IPS1. Interacts (via TRAF domains) with DYNC2I2 (via WD domains). Interacts with IFIT3 (via N-terminus). Interacts with TICAM2. Interacts with CARD14. Interacts with CD40 and MAP3K8; the interaction is required for ERK activation. Interacts with TICAM1 and this interaction is enhanced in the presence of WDFY1. Interacts with TANK; this interaction increases in response to DNA damage. Interacts with USP10; this interaction increases in response to DNA damage. Interacts with ZC3H12A; this interaction increases in response to DNA damage and is stimulated by TANK. Interacts with WDFY3. Interacts with TRIM13. Interacts with GPS2. Interacts (via C-terminus) with SASH1. Interacts with LRRC19. Interacts with IL17RA and TRAF3IP2. Interacts with TOMM70. Interacts with AMBRA1; interaction is required to mediate 'Lys-63'-linked ubiquitination of ULK1. Interacts with CRBN; this interaction inhibits TLR4-mediated signaling by preventing TRAF6-mediated ubiquitination of ECSIT. Sumoylated on Lys-124, Lys-142 and Lys-453 with SUMO1. In terms of processing, polyubiquitinated on Lys-124 by TRAF3IP2; after cell stimulation with IL17A. Polyubiquitinated on Lys-124; after cell stimulation with IL1B or TGFB. This ligand-induced cell stimulation leads to dimerization/oligomerization of TRAF6 molecules, followed by auto-ubiquitination which involves UBE2N and UBE2V1 and leads to TRAF6 activation. This 'Lys-63' site-specific poly-ubiquitination appears to be associated with the activation of signaling molecules. Deubiquitinated by USP10 in a TANK-dependent manner, leading to the negative regulation of NF-kappa-B signaling upon DNA damage. LRRC19 induces 'Lys-63' ubiquitination. Ubiquitinated at Lys-319 by the SCF(FBXL2) complex, leading to its degradation by the proteasome.

The protein localises to the cytoplasm. It is found in the cell cortex. Its subcellular location is the nucleus. It localises to the lipid droplet. The enzyme catalyses S-ubiquitinyl-[E2 ubiquitin-conjugating enzyme]-L-cysteine + [acceptor protein]-L-lysine = [E2 ubiquitin-conjugating enzyme]-L-cysteine + N(6)-ubiquitinyl-[acceptor protein]-L-lysine.. It functions in the pathway protein modification; protein ubiquitination. Functionally, E3 ubiquitin ligase that, together with UBE2N and UBE2V1, mediates the synthesis of 'Lys-63'-linked-polyubiquitin chains conjugated to proteins, such as ECSIT, IKBKG, IRAK1, AKT1 and AKT2. Also mediates ubiquitination of free/unanchored polyubiquitin chain that leads to MAP3K7 activation. Leads to the activation of NF-kappa-B and JUN. Seems to also play a role in dendritic cells (DCs) maturation and/or activation. Represses c-Myb-mediated transactivation, in B-lymphocytes. Adapter protein that seems to play a role in signal transduction initiated via TNF receptor, IL-1 receptor and IL-17 receptor. Regulates osteoclast differentiation by mediating the activation of adapter protein complex 1 (AP-1) and NF-kappa-B, in response to RANK-L stimulation. Together with MAP3K8, mediates CD40 signals that activate ERK in B-cells and macrophages, and thus may play a role in the regulation of immunoglobulin production. Acts as a regulator of the JNK and NF-kappa-B signaling pathways by initiating assembly of heterotypic 'Lys-63'-/'Lys-48'-linked branched ubiquitin chains that are then recognized by TAB2: TRAF6 catalyzes initial 'Lys-63'-linked-polyubiquitin chains that are then branched via 'Lys-48'-linked polyubiquitin by HUWE1. 'Lys-63'-/'Lys-48'-linked branched ubiquitin chains protect 'Lys-63'-linkages from CYLD deubiquitination. Also participates in the TCR signaling by ubiquitinating LAT. The sequence is that of TNF receptor-associated factor 6 (TRAF6) from Cercocebus atys (Sooty mangabey).